A 539-amino-acid chain; its full sequence is MPGINGAGPSNFFWQWRTDGEPVTEREHDSSRSASSANSPELPPPASPAESGRQRLLRSSALSRQTREWLEATPARVQGATPPAEARQSPEAQQAERIVQELVRGGADLNNVRTMLRNVMDNNAVAFSRVERDILLQHFPNMPMTGISSDSVLANELRQRLRQTVRQQRIQSSTPARLADSSSGSSQRSLIGRSTMLMTPGRSSSSSAAASRTSVDRHPQGLDLESARLASAARHNHSANQTNEALRRLTQEGVDMERLRTSLGRYIMSLEPLPPDLRRALESVGINPFIPEELSLVDHPVLNFSAALNRMLASRQTTTNSPELPPLASSAESGRRRLLRSPPLLSGQREWIEQSMRQEAEPQSSRLNRAVRLAVMPPQNENEDNVAYAIRLRRLNPGADVSRVVASFITDPAARQQVVNDIRAALDIAPQFSQLRTISKADAESEELGFRDAADHPDNATSCLFGEELSLSNPDQQVIGLAVNPTDKPQPYSQEVNKALTFMDMKKLAQYLADKPEHPLNRQRLDAKNIAKYAFKIVP.

Disordered stretches follow at residues 1 to 93 (MPGI…PEAQ), 163 to 220 (QTVR…RHPQ), 230 to 249 (ASAA…LRRL), and 315 to 336 (RQTT…SGRR). Positions 18–31 (TDGEPVTEREHDSS) are enriched in basic and acidic residues. Residues 181-194 (SSSGSSQRSLIGRS) show a composition bias toward low complexity.

This sequence belongs to the HopAB family.

It is found in the secreted. In terms of biological role, effector protein that plays different roles depending on the species and plant cultivars that interact with the pathogen. Acts as a virulence determinant by enhancing the development of disease symptoms and bacterial growth. Acts as an avirulence factor by eliciting hypersensitive response (HR) and plant resistance. The protein is Effector protein hopAB1 (hopAB1) of Pseudomonas savastanoi pv. phaseolicola (strain 1448A / Race 6) (Pseudomonas syringae pv. phaseolicola (strain 1448A / Race 6)).